We begin with the raw amino-acid sequence, 167 residues long: Large ribosomal subunit protein bL9 (167 aa).

The protein belongs to the bacterial ribosomal protein bL9 family.

Its function is as follows. Binds to the 23S rRNA. The polypeptide is Large ribosomal subunit protein bL9 (Nitratidesulfovibrio vulgaris (strain DSM 19637 / Miyazaki F) (Desulfovibrio vulgaris)).